The chain runs to 36 residues: Photosystem I reaction center subunit VIII (36 aa).

Residues 8–28 (SLFVPLVGLVFPAIAMASLFL) traverse the membrane as a helical segment.

It belongs to the PsaI family.

It localises to the plastid. The protein resides in the chloroplast thylakoid membrane. Its function is as follows. May help in the organization of the PsaL subunit. The protein is Photosystem I reaction center subunit VIII of Brassica oleracea (Wild cabbage).